The primary structure comprises 283 residues: Probable endonuclease 4 (283 aa).

Zn(2+) contacts are provided by H69, H109, E145, D179, H182, H216, D229, H231, and E261.

Belongs to the AP endonuclease 2 family. It depends on Zn(2+) as a cofactor.

It carries out the reaction Endonucleolytic cleavage to 5'-phosphooligonucleotide end-products.. In terms of biological role, endonuclease IV plays a role in DNA repair. It cleaves phosphodiester bonds at apurinic or apyrimidinic (AP) sites, generating a 3'-hydroxyl group and a 5'-terminal sugar phosphate. The polypeptide is Probable endonuclease 4 (Prosthecochloris aestuarii (strain DSM 271 / SK 413)).